We begin with the raw amino-acid sequence, 345 residues long: Probable aldo-keto reductase 3 (345 aa).

Residue tyrosine 63 is the Proton donor of the active site. Residue histidine 130 participates in substrate binding. 209–219 contacts NADP(+); sequence SPLGRGFFASG.

Belongs to the aldo/keto reductase family.

This chain is Probable aldo-keto reductase 3, found in Arabidopsis thaliana (Mouse-ear cress).